The sequence spans 78 residues: Large ribosomal subunit protein bL28 (78 aa).

Residues 1–21 (MSRVCQVTGKKPMVGNNRSHA) form a disordered region.

This sequence belongs to the bacterial ribosomal protein bL28 family.

This Shewanella woodyi (strain ATCC 51908 / MS32) protein is Large ribosomal subunit protein bL28.